An 863-amino-acid chain; its full sequence is Paramyosin (863 aa).

The interval 1-26 (MSESHVKISRTIIRGTSPSTVRLESP) is nonhelical region. Residues 27-836 (VRELEDLLDL…ERTITIKRTI (810 aa)) are a coiled coil. The interval 837 to 863 (GGPGSRAVSVVREINSVSRGNRATSIM) is nonhelical region.

This sequence belongs to the paramyosin family. In terms of assembly, homodimer.

The protein localises to the cytoplasm. Its subcellular location is the myofibril. Its function is as follows. Paramyosin is a major structural component of many thick filaments isolated from invertebrate muscles. In Echinococcus granulosus (Hydatid tapeworm), this protein is Paramyosin.